The chain runs to 585 residues: Probable monoterpene synthase MTS1, chloroplastic (585 aa).

Residues 1 to 29 form a disordered region; that stretch reads MSLSGVPLSAGLAPSPSNKPTNGKGQNIV. The N-terminal 31 residues, 1-31, are a transit peptide targeting the chloroplast; the sequence is MSLSGVPLSAGLAPSPSNKPTNGKGQNIVRR. The span at 15 to 25 shows a compositional bias: polar residues; the sequence is SPSNKPTNGKG. (2E)-geranyl diphosphate-binding residues include Arg298, Asp335, Asp339, Arg476, and Asp479. Residues Asp335 and Asp339 each contribute to the Mg(2+) site. The DDXXD motif motif lies at 335–339; the sequence is DDIYD. Positions 479, 483, and 487 each coordinate Mg(2+).

It belongs to the terpene synthase family. Tpsb subfamily. Requires Mg(2+) as cofactor. It depends on Mn(2+) as a cofactor. In terms of tissue distribution, expressed in trichomes. Detected in flowers, but not in leaves.

It is found in the plastid. The protein resides in the chloroplast. This chain is Probable monoterpene synthase MTS1, chloroplastic, found in Humulus lupulus (European hop).